Consider the following 81-residue polypeptide: Small ribosomal subunit protein bS16c (81 aa).

This sequence belongs to the bacterial ribosomal protein bS16 family.

The protein localises to the plastid. It localises to the chloroplast. In Emiliania huxleyi (Coccolithophore), this protein is Small ribosomal subunit protein bS16c.